Reading from the N-terminus, the 417-residue chain is Actin-related protein 10 (417 aa).

This sequence belongs to the actin family. Subunit of dynactin, a multiprotein complex part of a tripartite complex with dynein and a adapter, such as BICDL1, BICD2 or HOOK3. The dynactin complex is built around ACTR1A/ACTB filament and consists of an actin-related filament composed of a shoulder domain, a pointed end and a barbed end. Its length is defined by its flexible shoulder domain. The soulder is composed of 2 DCTN1 subunits, 4 DCTN2 and 2 DCTN3. The 4 DCNT2 (via N-terminus) bind the ACTR1A filament and act as molecular rulers to determine the length. The pointed end is important for binding dynein-dynactin cargo adapters. Consists of 4 subunits: ACTR10, DCNT4, DCTN5 and DCTN6. The barbed end is composed of a CAPZA1:CAPZB heterodimers, which binds ACTR1A/ACTB filament and dynactin and stabilizes dynactin.

Its subcellular location is the cytoplasm. The protein localises to the cytoskeleton. Functionally, part of the dynactin complex that activates the molecular motor dynein for ultra-processive transport along microtubules. The protein is Actin-related protein 10 (ACTR10) of Homo sapiens (Human).